The primary structure comprises 111 residues: UPF0145 protein BMA10229_A0446 (111 aa).

It belongs to the UPF0145 family.

This chain is UPF0145 protein BMA10229_A0446, found in Burkholderia mallei (strain NCTC 10229).